The chain runs to 283 residues: Phosphatidylglycerol--prolipoprotein diacylglyceryl transferase (283 aa).

Transmembrane regions (helical) follow at residues 17–37 (LAVRWYALSYILGFILFTFLG), 56–76 (FLTWGILGVILGGRLGYVLFY), and 92–112 (WEGGMSFHGGFLGVVIAIWLF). An a 1,2-diacyl-sn-glycero-3-phospho-(1'-sn-glycerol)-binding site is contributed by Arg139. 2 helical membrane-spanning segments follow: residues 222–242 (GQTAALFLGGYGVFRFIAEFA) and 255–275 (GLSMGQWLSVPMIVLGIVGFV).

It belongs to the Lgt family.

The protein resides in the cell inner membrane. The catalysed reaction is L-cysteinyl-[prolipoprotein] + a 1,2-diacyl-sn-glycero-3-phospho-(1'-sn-glycerol) = an S-1,2-diacyl-sn-glyceryl-L-cysteinyl-[prolipoprotein] + sn-glycerol 1-phosphate + H(+). It participates in protein modification; lipoprotein biosynthesis (diacylglyceryl transfer). Catalyzes the transfer of the diacylglyceryl group from phosphatidylglycerol to the sulfhydryl group of the N-terminal cysteine of a prolipoprotein, the first step in the formation of mature lipoproteins. This Neisseria gonorrhoeae (strain ATCC 700825 / FA 1090) protein is Phosphatidylglycerol--prolipoprotein diacylglyceryl transferase.